We begin with the raw amino-acid sequence, 177 residues long: Large ribosomal subunit protein uL6 (177 aa).

Over residues 154-171 (PEPYKGKGVRYADEQVRR) the composition is skewed to basic and acidic residues. Residues 154–177 (PEPYKGKGVRYADEQVRRKEAKKK) are disordered.

The protein belongs to the universal ribosomal protein uL6 family. As to quaternary structure, part of the 50S ribosomal subunit.

Its function is as follows. This protein binds to the 23S rRNA, and is important in its secondary structure. It is located near the subunit interface in the base of the L7/L12 stalk, and near the tRNA binding site of the peptidyltransferase center. The sequence is that of Large ribosomal subunit protein uL6 from Marinobacter nauticus (strain ATCC 700491 / DSM 11845 / VT8) (Marinobacter aquaeolei).